Here is a 357-residue protein sequence, read N- to C-terminus: Methylthioribose-1-phosphate isomerase (357 aa).

Residues 49-51 (RGA), R89, and Q197 each bind substrate. Catalysis depends on D238, which acts as the Proton donor. Residue 248-249 (NK) participates in substrate binding.

Belongs to the eIF-2B alpha/beta/delta subunits family. MtnA subfamily.

It catalyses the reaction 5-(methylsulfanyl)-alpha-D-ribose 1-phosphate = 5-(methylsulfanyl)-D-ribulose 1-phosphate. Its pathway is amino-acid biosynthesis; L-methionine biosynthesis via salvage pathway; L-methionine from S-methyl-5-thio-alpha-D-ribose 1-phosphate: step 1/6. Catalyzes the interconversion of methylthioribose-1-phosphate (MTR-1-P) into methylthioribulose-1-phosphate (MTRu-1-P). The protein is Methylthioribose-1-phosphate isomerase of Leptospira biflexa serovar Patoc (strain Patoc 1 / Ames).